Reading from the N-terminus, the 71-residue chain is Long neurotoxin Tx-NM3-1 (71 aa).

5 disulfide bridges follow: cysteine 3/cysteine 20, cysteine 14/cysteine 41, cysteine 26/cysteine 30, cysteine 45/cysteine 56, and cysteine 57/cysteine 62.

In terms of tissue distribution, expressed by the venom gland.

It localises to the secreted. In terms of biological role, binds with high affinity to muscular (alpha-1-beta-1-gamma-delta/CHRNA1-CHRNB1-CHRNG-CHRND) and neuronal (alpha-7/CHRNA7) nicotinic acetylcholine receptor (nAChR) and inhibits acetylcholine from binding to the receptor, thereby impairing neuromuscular and neuronal transmission. Ranges of nAChR inhibition are in nanomolar (competitive binding with alpha-bungarotoxin gives Ki=1.66 nM on muscle nAChR and Ki=4.84 nM on alpha-7). Also shows moderate inhibition on GABA(A) alpha-1-beta-3-gamma-2 receptor (GABRA1-GABRB3-GABRG2) (IC(50)=0.68 uM), and a lower inhibition on alpha-1-beta-2-gamma-2 (GABRA1-GABRB2-GABRG2) and alpha-3-beta-2-gamma-2 (GABRA3-GABRB2-GABRG2). The polypeptide is Long neurotoxin Tx-NM3-1 (Naja melanoleuca (Forest cobra)).